Reading from the N-terminus, the 498-residue chain is uncharacterized protein (498 aa).

The next 11 membrane-spanning stretches (helical) occupy residues 54 to 74 (LLKMDLVISPIIGFLYLMAFL), 100 to 120 (VAVSIFYVLYILVETPSVVLV), 128 to 148 (MLAFISFAWSMTVLFSGFMSS), 150 to 170 (GGLIATRLILGLLEGCLFPAL), 188 to 208 (SYLFASAGLAGAFGGLFAYAL), 221 to 241 (WIYIVEGLVSFIGVPLCLFAL), 302 to 322 (VLYGFSSFLPVIIKGLGFVGL), 326 to 346 (YMTIPVYIAGVISFLFVAWLS), 353 to 373 (AVYLISASTVVAVGYIIMLAS), 381 to 401 (TATYIIAIGCYIGPGLNLGWL), and 446 to 466 (AFTLGCVIVGGLAYVVMFFSL).

Belongs to the major facilitator superfamily. Allantoate permease family.

It is found in the membrane. This is an uncharacterized protein from Schizosaccharomyces pombe (strain 972 / ATCC 24843) (Fission yeast).